Consider the following 393-residue polypeptide: MYTRLSSLALRHHRHNHNNSVLLLSSLISLRHCSSPPTNPEPPQTLASLRHRLAVESPSLSDFVRLQTSDDYSVEVGTKKKPLSKPKWMKESIPGGAKYTQIKKKLRQLNLHTVCEEARCPNMGECWSGGETGTATATIMILGDTCTRGCRFCNVKTSRTPPPPDPDEPSKVAEAIASWGLDYVVITSVDRDDLPDQGSGHFAETVQKLKILKPNMLIEALVPDFRGDPGCVEKVSKSGLDVFAHNIETVEELQSAVRDHRANFKQSLEVLKLAKEYADAGTLTKTSIMLGCGETPDQVVRTMEKVRAAGVDVMTFGQYMRPSKRHMPVSEYITPEAFEKYRILGMDMGFRYVASGPMVRSSYKAGEFYIKSMIDADRAMSWASSSPSPLPAA.

[4Fe-4S] cluster contacts are provided by Cys-115, Cys-120, Cys-126, Cys-146, Cys-150, Cys-153, and Ser-362. The 221-residue stretch at 131–351 (ETGTATATIM…RILGMDMGFR (221 aa)) folds into the Radical SAM core domain.

It belongs to the radical SAM superfamily. Lipoyl synthase family. It depends on [4Fe-4S] cluster as a cofactor.

It is found in the mitochondrion. The catalysed reaction is [[Fe-S] cluster scaffold protein carrying a second [4Fe-4S](2+) cluster] + N(6)-octanoyl-L-lysyl-[protein] + 2 oxidized [2Fe-2S]-[ferredoxin] + 2 S-adenosyl-L-methionine + 4 H(+) = [[Fe-S] cluster scaffold protein] + N(6)-[(R)-dihydrolipoyl]-L-lysyl-[protein] + 4 Fe(3+) + 2 hydrogen sulfide + 2 5'-deoxyadenosine + 2 L-methionine + 2 reduced [2Fe-2S]-[ferredoxin]. It participates in protein modification; protein lipoylation via endogenous pathway; protein N(6)-(lipoyl)lysine from octanoyl-[acyl-carrier-protein]: step 2/2. Functionally, catalyzes the radical-mediated insertion of two sulfur atoms into the C-6 and C-8 positions of the octanoyl moiety bound to the lipoyl domains of lipoate-dependent enzymes, thereby converting the octanoylated domains into lipoylated derivatives. In Vitis vinifera (Grape), this protein is Lipoyl synthase, mitochondrial.